The sequence spans 143 residues: Nucleoside diphosphate kinase (143 aa).

6 residues coordinate ATP: lysine 11, phenylalanine 59, arginine 87, threonine 93, arginine 104, and asparagine 114. Residue histidine 117 is the Pros-phosphohistidine intermediate of the active site.

This sequence belongs to the NDK family. As to quaternary structure, homotetramer. Requires Mg(2+) as cofactor.

Its subcellular location is the cytoplasm. The catalysed reaction is a 2'-deoxyribonucleoside 5'-diphosphate + ATP = a 2'-deoxyribonucleoside 5'-triphosphate + ADP. It carries out the reaction a ribonucleoside 5'-diphosphate + ATP = a ribonucleoside 5'-triphosphate + ADP. In terms of biological role, major role in the synthesis of nucleoside triphosphates other than ATP. The ATP gamma phosphate is transferred to the NDP beta phosphate via a ping-pong mechanism, using a phosphorylated active-site intermediate. This chain is Nucleoside diphosphate kinase, found in Shewanella denitrificans (strain OS217 / ATCC BAA-1090 / DSM 15013).